The chain runs to 210 residues: uncharacterized protein (210 aa).

2 disordered regions span residues 1–21 and 168–210; these read MHRL…TDAI and EALQ…STAQ. A coiled-coil region spans residues 21–175; the sequence is IDSLDKRSDS…ELEALQQESS (155 aa). Polar residues predominate over residues 174-184; it reads SSWLGDQSTAE.

Belongs to the SNF7 family.

This is an uncharacterized protein from Schizosaccharomyces pombe (strain 972 / ATCC 24843) (Fission yeast).